A 798-amino-acid chain; its full sequence is Protocadherin beta-2 (798 aa).

The signal sequence occupies residues 1–30 (MEAGEGKERVPKQRQVLIFFVLLGIAQASC). The Extracellular portion of the chain corresponds to 31-692 (QPRHYSVAEE…AQADLLTVYL (662 aa)). Cadherin domains are found at residues 37-135 (VAEE…SPVF), 136-244 (LDKE…VPEF), 249-349 (YEVQ…PPEL), 354-453 (LINQ…APAF), and 458-563 (YTLF…SPFV). N171 carries an N-linked (GlcNAc...) asparagine glycan. N6-acetyllysine is present on K299. 2 N-linked (GlcNAc...) asparagine glycosylation sites follow: N420 and N438. N569 is a glycosylation site (N-linked (GlcNAc...) asparagine). The 104-residue stretch at 570-673 (GSAPCTELVP…LVDGFSQPYL (104 aa)) folds into the Cadherin 6 domain. Residues 693 to 713 (VVALASVSSLFLFSVLLFVAV) form a helical membrane-spanning segment. Topologically, residues 714-798 (RLCRRSRAAS…PSFRKSFEFT (85 aa)) are cytoplasmic.

The protein localises to the cell membrane. Functionally, potential calcium-dependent cell-adhesion protein. May be involved in the establishment and maintenance of specific neuronal connections in the brain. The protein is Protocadherin beta-2 (PCDHB2) of Homo sapiens (Human).